The chain runs to 237 residues: Orotidine 5'-phosphate decarboxylase (237 aa).

Substrate-binding positions include aspartate 11, lysine 34, 61–70, threonine 124, arginine 186, glutamine 195, glycine 215, and arginine 216; that span reads DLKLHDIPNT. The Proton donor role is filled by lysine 63.

This sequence belongs to the OMP decarboxylase family. Type 1 subfamily. Homodimer.

It catalyses the reaction orotidine 5'-phosphate + H(+) = UMP + CO2. It participates in pyrimidine metabolism; UMP biosynthesis via de novo pathway; UMP from orotate: step 2/2. Functionally, catalyzes the decarboxylation of orotidine 5'-monophosphate (OMP) to uridine 5'-monophosphate (UMP). The protein is Orotidine 5'-phosphate decarboxylase of Lactococcus lactis subsp. cremoris (strain SK11).